The primary structure comprises 483 residues: Myosin-binding protein H (483 aa).

A compositionally biased stretch (polar residues) spans 1 to 15 (MTGKATSEASVSTPE). The disordered stretch occupies residues 1–78 (MTGKATSEAS…PEPPSEDVPS (78 aa)). Phosphothreonine occurs at positions 2, 6, and 26. Residues 41-66 (QEQAPEPQKPQAQDPAAPAASAMPAA) show a composition bias toward low complexity. Positions 79 to 174 (APLRLTLEDV…LDQPVHIQEI (96 aa)) constitute a Fibronectin type-III 1 domain. The Ig-like C2-type 1 domain maps to 178–266 (PKIRVPRHLR…EGLEAKASID (89 aa)). A Fibronectin type-III 2 domain is found at 275 to 370 (PPSSIKLLDV…TKELAHIHKA (96 aa)). The 85-residue stretch at 388-472 (PSFTQPLADH…INVLGEASVD (85 aa)) folds into the Ig-like C2-type 2 domain.

The protein belongs to the immunoglobulin superfamily. MyBP family. Skeletal muscle. Expressed at low levels in heart ventricles.

In terms of biological role, binds to myosin; probably involved in interaction with thick myofilaments in the A-band. The protein is Myosin-binding protein H (Mybph) of Mus musculus (Mouse).